We begin with the raw amino-acid sequence, 473 residues long: Lactate utilization protein B (473 aa).

2 4Fe-4S ferredoxin-type domains span residues G302–Y332 and Y351–L380. [4Fe-4S] cluster contacts are provided by C311, C314, C317, C321, C364, C367, and C371.

This sequence belongs to the LutB/YkgF family.

Is involved in L-lactate degradation and allows cells to grow with lactate as the sole carbon source. Has probably a role as an electron transporter during oxidation of L-lactate. This is Lactate utilization protein B from Bacillus cereus (strain AH820).